We begin with the raw amino-acid sequence, 361 residues long: Alanine racemase (361 aa).

Lys-34 functions as the Proton acceptor; specific for D-alanine in the catalytic mechanism. At Lys-34 the chain carries N6-(pyridoxal phosphate)lysine. Arg-129 serves as a coordination point for substrate. Tyr-256 serves as the catalytic Proton acceptor; specific for L-alanine. Met-304 is a substrate binding site.

The protein belongs to the alanine racemase family. The cofactor is pyridoxal 5'-phosphate.

It carries out the reaction L-alanine = D-alanine. The protein operates within amino-acid biosynthesis; D-alanine biosynthesis; D-alanine from L-alanine: step 1/1. In terms of biological role, catalyzes the interconversion of L-alanine and D-alanine. May also act on other amino acids. The sequence is that of Alanine racemase (alr) from Corynebacterium glutamicum (strain R).